The following is a 374-amino-acid chain: Putative clathrin assembly protein At1g33340 (374 aa).

An ENTH domain is found at 30–163 (YNEKAFFDIE…GWIINQAGKL (134 aa)).

The protein resides in the membrane. It is found in the clathrin-coated pit. Its subcellular location is the golgi apparatus. It localises to the cytoplasmic vesicle. The protein localises to the clathrin-coated vesicle. The chain is Putative clathrin assembly protein At1g33340 from Arabidopsis thaliana (Mouse-ear cress).